Reading from the N-terminus, the 138-residue chain is Small ribosomal subunit protein uS11c (138 aa).

Belongs to the universal ribosomal protein uS11 family. In terms of assembly, part of the 30S ribosomal subunit.

The protein resides in the plastid. The sequence is that of Small ribosomal subunit protein uS11c from Cuscuta obtusiflora (Peruvian dodder).